Consider the following 566-residue polypeptide: Pentatricopeptide repeat-containing protein At4g11690 (566 aa).

PPR repeat units lie at residues 93 to 127, 128 to 158, 162 to 196, 197 to 231, 232 to 266, 267 to 301, 302 to 336, 337 to 371, 372 to 406, 407 to 441, 442 to 476, 477 to 511, and 512 to 546; these read KFRL…GFVP, GSNC…NKSK, DVYS…GFSP, NVVI…GLVA, NERT…GVFP, NLYT…GVSC, NIVT…GINP, NLIT…GLSP, SLVT…GIKP, SKVT…GLVP, DVHT…NCEP, NEVI…ELAP, and NVAS…GIDP.

Belongs to the PPR family. P subfamily.

This is Pentatricopeptide repeat-containing protein At4g11690 from Arabidopsis thaliana (Mouse-ear cress).